A 409-amino-acid polypeptide reads, in one-letter code: Protein ROOT PRIMORDIUM DEFECTIVE 1 (409 aa).

The PORR domain maps to 47 to 386 (VRDHGYDNYM…RLAELVLMSP (340 aa)).

In terms of tissue distribution, expressed in roots, hypocotyls, cotyledons and shoot apex.

Involved in pre-arranging the maintenance of the active cell proliferation during root primordium development. Does not seem to be involved in cell cycle progression. The chain is Protein ROOT PRIMORDIUM DEFECTIVE 1 (RPD1) from Arabidopsis thaliana (Mouse-ear cress).